The sequence spans 72 residues: Translation initiation factor IF-1 (72 aa).

The S1-like domain occupies 1–72 (MAKDDVIQMQ…SRARIVFRAK (72 aa)).

The protein belongs to the IF-1 family. As to quaternary structure, component of the 30S ribosomal translation pre-initiation complex which assembles on the 30S ribosome in the order IF-2 and IF-3, IF-1 and N-formylmethionyl-tRNA(fMet); mRNA recruitment can occur at any time during PIC assembly.

Its subcellular location is the cytoplasm. One of the essential components for the initiation of protein synthesis. Stabilizes the binding of IF-2 and IF-3 on the 30S subunit to which N-formylmethionyl-tRNA(fMet) subsequently binds. Helps modulate mRNA selection, yielding the 30S pre-initiation complex (PIC). Upon addition of the 50S ribosomal subunit IF-1, IF-2 and IF-3 are released leaving the mature 70S translation initiation complex. The polypeptide is Translation initiation factor IF-1 (Burkholderia mallei (strain NCTC 10247)).